Consider the following 267-residue polypeptide: Probable ribosomal RNA small subunit methyltransferase A (267 aa).

S-adenosyl-L-methionine contacts are provided by leucine 12, glycine 37, glutamate 58, aspartate 83, and asparagine 100.

The protein belongs to the class I-like SAM-binding methyltransferase superfamily. rRNA adenine N(6)-methyltransferase family. RsmA subfamily.

It localises to the cytoplasm. Functionally, specifically dimethylates two adjacent adenosines in the loop of a conserved hairpin near the 3'-end of 16S rRNA in the 30S particle. May play a critical role in biogenesis of 30S subunits. This Methanococcus maripaludis (strain DSM 14266 / JCM 13030 / NBRC 101832 / S2 / LL) protein is Probable ribosomal RNA small subunit methyltransferase A.